The sequence spans 930 residues: Nonribosomal peptide synthetase btyA (930 aa).

The adenylation (A) domain stretch occupies residues 31 to 440 (ESPHRLTYAE…RGRSKELICI (410 aa)). Positions 570–647 (PAGNETETLL…VLARQLQDGH (78 aa)) constitute a Carrier domain. S607 bears the O-(pantetheine 4'-phosphoryl)serine mark. A thioesterase (TE) domain region spans residues 667–920 (PLWLIHPIGG…EDNVHKVYRV (254 aa)).

The protein belongs to the NRP synthetase family.

It carries out the reaction 2 3-(4-hydroxyphenyl)pyruvate + H(+) = (2S)-2-(4-hydoxybenzyl)-3-(4-hydroxyphenyl)-2-furonol carboxylate + H2O. It functions in the pathway secondary metabolite biosynthesis. Nonribosomal peptide synthetase; part of the gene cluster that mediates the biosynthesis of butyrolactones, natural products that show a wide range of biological activities such as antitumor, antiparasitic or anti-inflammatory activity. The nonribosomal peptide synthetase btyA is responsible for the production of butyrolactone II, the core structure of butyrolactones. BtyA first activates 4-hydroxyphenylpyruvate (HPPA) through its A domain to AMP-HPPA. The HPPA unit is then loaded to the T domain and eventually transferred to the TE domain. Upon loading of another HPPA unit to the T domain, the TE domain promotes the enolate formation on the unit attached. Then aldol condensation establishes the carbon-carbon bond between the two units, followed by ester cyclization, and keto-enol tautomerization to yield the gamma-butyrolactone core. Hydrolysis, and finally esterification of the exposed carboxylic acid group yields butyrolactone II. Two additional enzymes, a prenyltransferase and an epoxidase, may be involved in the tailoring modifications of butyrolactone II to give butyrolactone III and butyrolactone I. The polypeptide is Nonribosomal peptide synthetase btyA (Aspergillus terreus (strain NIH 2624 / FGSC A1156)).